The primary structure comprises 270 residues: Hemin import ATP-binding protein HmuV (270 aa).

The ABC transporter domain occupies 5–242 (LEAEAATYSV…SLINRVFDIE (238 aa)). 37–44 (GPNGAGKS) is a binding site for ATP.

The protein belongs to the ABC transporter superfamily. Heme (hemin) importer (TC 3.A.1.14.5) family. In terms of assembly, the complex is composed of two ATP-binding proteins (HmuV), two transmembrane proteins (HmuU) and a solute-binding protein (HmuT).

Its subcellular location is the cell inner membrane. Part of the ABC transporter complex HmuTUV involved in hemin import. Responsible for energy coupling to the transport system. In Rhodopseudomonas palustris (strain BisA53), this protein is Hemin import ATP-binding protein HmuV.